Reading from the N-terminus, the 388-residue chain is UPF0229 protein BH1031 (388 aa).

Residues 80–117 (HVGQGDGDSQVGDVIARDPSAGQQGPGKGQGAGDQPGE) are disordered. A compositionally biased stretch (gly residues) spans 103 to 113 (QGPGKGQGAGD).

Belongs to the UPF0229 family.

The chain is UPF0229 protein BH1031 from Halalkalibacterium halodurans (strain ATCC BAA-125 / DSM 18197 / FERM 7344 / JCM 9153 / C-125) (Bacillus halodurans).